A 423-amino-acid polypeptide reads, in one-letter code: Site-specific recombinase Flp (423 aa).

The Tyr recombinase Flp-type domain occupies glycine 136–arginine 422. The active-site O-(3'-phospho-DNA)-tyrosine intermediate is the tyrosine 343.

The protein belongs to the 'phage' integrase family. As to quaternary structure, homotetramer.

In terms of biological role, part of the plasmid amplification system, which corrects any decrease in copy number caused by a rare missegregation event. Catalyzes the recombination between the large inverted repetitions of the 2-micron plasmid during plasmid replication. This recombination event changes the direction of one of the two replication forks in the bidirectionally replicating molecule, effectively resulting in multiple rounds of replication from a single initiation event. Binds specifically to the FLP recognition target (FRT) site where it induces DNA to bend. Three types of bend exist. Type I is approximately 60 degrees and results from 1 FLP molecule binding to 1 symmetry element. Type II is &gt;144 degrees and results from FLP molecules binding to symmetry elements a and b. Type III is approximately 65 degrees and results from FLP molecules binding to symmetry elements b and c. This is Site-specific recombinase Flp (FLP1) from Saccharomyces cerevisiae (strain ATCC 204508 / S288c) (Baker's yeast).